The primary structure comprises 387 residues: GDP-mannose transporter (387 aa).

A compositionally biased stretch (basic and acidic residues) spans 1-25 (MADTKKNDNYAIDMDKLDAESDRFR). The Cytoplasmic segment spans residues 1-42 (MADTKKNDNYAIDMDKLDAESDRFRPPPQPQPRHSSSSHSQS). Residues 1 to 45 (MADTKKNDNYAIDMDKLDAESDRFRPPPQPQPRHSSSSHSQSISN) are disordered. The segment covering 32–45 (PRHSSSSHSQSISN) has biased composition (low complexity). Residues 43-63 (ISNSPVLPILSYCASSILMTV) traverse the membrane as a helical segment. Residues 64 to 71 (TNKYVLSG) lie on the Lumenal side of the membrane. Residues 72-92 (VQFNLNFFLLCVQSVVCIIAI) form a helical membrane-spanning segment. Over 93-112 (QTCKSMGLINYRDFNSDEAK) the chain is Cytoplasmic. The chain crosses the membrane as a helical span at residues 113-129 (KWFPISLLLIGMIYTGT). Over 130-136 (KALKFLS) the chain is Lumenal. A helical transmembrane segment spans residues 137-153 (IPVYTIFKNLTIILIAY). Topologically, residues 154-162 (GEVLWFGGS) are cytoplasmic. The helical transmembrane segment at 163-184 (VTGMALFSFGLMVLSSVIAAWA) threads the bilayer. The Lumenal segment spans residues 185–206 (DIKHALDTSGFSGAEATSKIST). A helical transmembrane segment spans residues 207-227 (LNAGYIWMLINCLCTSTYILG). Topologically, residues 228–241 (MRKRIKLTNFKDFD) are cytoplasmic. The chain crosses the membrane as a helical span at residues 242 to 262 (TMFYNNLLSIPILMIGSFIVE). Residues 263 to 280 (DWSSENINKNFPIETRNS) lie on the Lumenal side of the membrane. A helical transmembrane segment spans residues 281 to 301 (LIFAMIFSGLSSVFISYTSAW). Topologically, residues 302-309 (CVRVTSST) are cytoplasmic. A helical membrane pass occupies residues 310-329 (TYSMVGALNKLPIALSGLIF). Residues 330–332 (FGD) lie on the Lumenal side of the membrane. A helical transmembrane segment spans residues 333 to 355 (PVTVPSVSAIVVGFISGIVYSLA). Over 356-387 (KVKQNAKPRTGVLPTTNPVSASTQSMRDGLKS) the chain is Cytoplasmic. Residues 366–387 (GVLPTTNPVSASTQSMRDGLKS) form a disordered region. Residues 368–381 (LPTTNPVSASTQSM) show a composition bias toward polar residues.

This sequence belongs to the TPT transporter family. SLC35D subfamily. Homooligomer.

The protein localises to the golgi apparatus membrane. It is found in the cytoplasmic vesicle membrane. The protein resides in the endoplasmic reticulum membrane. Its function is as follows. Involved in the import of GDP-mannose from the cytoplasm into the Golgi lumen. In Coccidioides immitis (strain RS) (Valley fever fungus), this protein is GDP-mannose transporter (VRG4).